The following is a 64-amino-acid chain: MLPHTSDTTSTFRLKTVFDLVFENRNIIYKADVVNDIIHHRLKVSLPMIKSLFYKMSLPTTITT.

This sequence belongs to the orthopoxviruses VACWR006 protein family.

This is an uncharacterized protein from Vaccinia virus (strain Western Reserve) (VACV).